The primary structure comprises 190 residues: uncharacterized protein (190 aa).

The first 18 residues, 1–18 (MKLVHMASGLAVAIALAA), serve as a signal peptide directing secretion. The N-palmitoyl cysteine moiety is linked to residue C19. C19 is lipidated: S-diacylglycerol cysteine. Low complexity predominate over residues 162 to 182 (ASGGATTTVPSTSPTQVNPSS). Residues 162–190 (ASGGATTTVPSTSPTQVNPSSAVPAPTQY) form a disordered region.

The protein resides in the cell membrane. This is an uncharacterized protein from Escherichia coli (strain K12).